Here is a 123-residue protein sequence, read N- to C-terminus: uncharacterized protein (123 aa).

Positions 1 to 20 are cleaved as a signal peptide; the sequence is MARTLALRASAGLVAGMAMA.

This is an uncharacterized protein from Mycobacterium bovis (strain ATCC BAA-935 / AF2122/97).